The primary structure comprises 172 residues: Peptidyl-prolyl cis-trans isomerase (172 aa).

The PPIase cyclophilin-type domain maps to 10 to 168 (YFDVYANEES…YRIEIRDCGV (159 aa)).

It belongs to the cyclophilin-type PPIase family.

The protein localises to the cytoplasm. It carries out the reaction [protein]-peptidylproline (omega=180) = [protein]-peptidylproline (omega=0). Its function is as follows. PPIases accelerate the folding of proteins. They catalyze the cis-trans isomerization of proline imidic peptide bonds in oligopeptides. The sequence is that of Peptidyl-prolyl cis-trans isomerase (CPR1) from Encephalitozoon cuniculi (strain GB-M1) (Microsporidian parasite).